The sequence spans 333 residues: UPF0284 protein VNG_1572C (333 aa).

This sequence belongs to the UPF0284 family.

The protein is UPF0284 protein VNG_1572C of Halobacterium salinarum (strain ATCC 700922 / JCM 11081 / NRC-1) (Halobacterium halobium).